An 81-amino-acid polypeptide reads, in one-letter code: uncharacterized protein (81 aa).

This is an uncharacterized protein from Caenorhabditis elegans.